Here is an 864-residue protein sequence, read N- to C-terminus: DNA mismatch repair protein MutS (864 aa).

Residue 607 to 614 (GPNMGGKS) coordinates ATP.

The protein belongs to the DNA mismatch repair MutS family.

In terms of biological role, this protein is involved in the repair of mismatches in DNA. It is possible that it carries out the mismatch recognition step. This protein has a weak ATPase activity. The protein is DNA mismatch repair protein MutS of Neisseria gonorrhoeae (strain ATCC 700825 / FA 1090).